A 275-amino-acid chain; its full sequence is 2-dehydro-3-deoxyphosphooctonate aldolase (275 aa).

Belongs to the KdsA family.

It localises to the cytoplasm. The enzyme catalyses D-arabinose 5-phosphate + phosphoenolpyruvate + H2O = 3-deoxy-alpha-D-manno-2-octulosonate-8-phosphate + phosphate. The protein operates within carbohydrate biosynthesis; 3-deoxy-D-manno-octulosonate biosynthesis; 3-deoxy-D-manno-octulosonate from D-ribulose 5-phosphate: step 2/3. It functions in the pathway bacterial outer membrane biogenesis; lipopolysaccharide biosynthesis. In Francisella tularensis subsp. mediasiatica (strain FSC147), this protein is 2-dehydro-3-deoxyphosphooctonate aldolase.